A 205-amino-acid polypeptide reads, in one-letter code: Ribosome maturation factor RimP (205 aa).

Residues 1–12 (MSNAEAQASSDH) show a composition bias toward polar residues. Disordered regions lie at residues 1 to 24 (MSNA…APAH) and 186 to 205 (FSHL…SEEA).

This sequence belongs to the RimP family.

It localises to the cytoplasm. Functionally, required for maturation of 30S ribosomal subunits. The chain is Ribosome maturation factor RimP from Pseudarthrobacter chlorophenolicus (strain ATCC 700700 / DSM 12829 / CIP 107037 / JCM 12360 / KCTC 9906 / NCIMB 13794 / A6) (Arthrobacter chlorophenolicus).